A 273-amino-acid polypeptide reads, in one-letter code: SUMO-1 cysteine protease S273R (273 aa).

Residues histidine 168 and asparagine 187 contribute to the active site. Substrate is bound at residue glutamine 226. The active-site Nucleophile is the cysteine 232.

The protein belongs to the peptidase C63 family.

Its subcellular location is the host cytoplasm. The protein localises to the virion. Cysteine protease that plays several role during infection including processing of the structural polyprotein or inhibition of the host immune response. Catalyzes the maturation of the pp220 and pp62 polyprotein precursors into core-shell proteins. Plays a role in the disruption of host pyroptosis via specific cleavage of gasdermin D/GSDMD. In addition, strongly decreases the host cGAS-STING signaling by targeting IKBKE via its enzymatic activity. Also impairs host FOXJ1-mediated antiviral effect via degradation of FOXJ1. The sequence is that of SUMO-1 cysteine protease S273R from Ornithodoros (relapsing fever ticks).